The primary structure comprises 704 residues: Elongation factor G (704 aa).

In terms of domain architecture, tr-type G spans 8–291 (VRYRNIGISA…AVVEYLPSPS (284 aa)). Residues 17–24 (AHIDAGKT), 88–92 (DTPGH), and 142–145 (NKMD) each bind GTP.

The protein belongs to the TRAFAC class translation factor GTPase superfamily. Classic translation factor GTPase family. EF-G/EF-2 subfamily.

Its subcellular location is the cytoplasm. In terms of biological role, catalyzes the GTP-dependent ribosomal translocation step during translation elongation. During this step, the ribosome changes from the pre-translocational (PRE) to the post-translocational (POST) state as the newly formed A-site-bound peptidyl-tRNA and P-site-bound deacylated tRNA move to the P and E sites, respectively. Catalyzes the coordinated movement of the two tRNA molecules, the mRNA and conformational changes in the ribosome. In Blochmanniella pennsylvanica (strain BPEN), this protein is Elongation factor G.